A 236-amino-acid chain; its full sequence is Purine nucleoside phosphorylase (236 aa).

A purine D-ribonucleoside is bound at residue His-5. Phosphate is bound by residues Gly-21, Arg-25, Arg-43, and Arg-86–Thr-89. Residues Glu-163, Glu-180–Glu-182, and Ser-204–Asp-205 contribute to the a purine D-ribonucleoside site.

It belongs to the PNP/UDP phosphorylase family. Homohexamer; disulfide-linked. Trimer of homodimers, with three symmetric intersubunit disulfide bonds linking the dimers to one another.

The enzyme catalyses S-methyl-5'-thioadenosine + phosphate = 5-(methylsulfanyl)-alpha-D-ribose 1-phosphate + adenine. The catalysed reaction is a purine D-ribonucleoside + phosphate = a purine nucleobase + alpha-D-ribose 1-phosphate. It carries out the reaction a purine 2'-deoxy-D-ribonucleoside + phosphate = a purine nucleobase + 2-deoxy-alpha-D-ribose 1-phosphate. The protein operates within purine metabolism; purine nucleoside salvage. Its function is as follows. Cleavage of guanosine or inosine to respective bases and sugar-1-phosphate molecules. Cleaves inosine, guanosine, and adenosine with a better efficiency than MTA. This is Purine nucleoside phosphorylase from Saccharolobus solfataricus (strain ATCC 35092 / DSM 1617 / JCM 11322 / P2) (Sulfolobus solfataricus).